A 302-amino-acid polypeptide reads, in one-letter code: 4-diphosphocytidyl-2-C-methyl-D-erythritol kinase (302 aa).

Lys-32 is a catalytic residue. 115–125 (PMGGGVGGGSS) provides a ligand contact to ATP. Asp-157 is a catalytic residue.

Belongs to the GHMP kinase family. IspE subfamily.

It catalyses the reaction 4-CDP-2-C-methyl-D-erythritol + ATP = 4-CDP-2-C-methyl-D-erythritol 2-phosphate + ADP + H(+). It functions in the pathway isoprenoid biosynthesis; isopentenyl diphosphate biosynthesis via DXP pathway; isopentenyl diphosphate from 1-deoxy-D-xylulose 5-phosphate: step 3/6. Catalyzes the phosphorylation of the position 2 hydroxy group of 4-diphosphocytidyl-2C-methyl-D-erythritol. In Actinobacillus succinogenes (strain ATCC 55618 / DSM 22257 / CCUG 43843 / 130Z), this protein is 4-diphosphocytidyl-2-C-methyl-D-erythritol kinase.